The primary structure comprises 168 residues: UPF0478 protein SH1183 (168 aa).

A helical transmembrane segment spans residues 7–27; that stretch reads IAGIIAAIAFLVLCIGIVVVL. Residues 144-168 are disordered; sequence YRNTSVGNDANHSNENYTTNVEKNF.

The protein belongs to the UPF0478 family.

Its subcellular location is the cell membrane. This is UPF0478 protein SH1183 from Staphylococcus haemolyticus (strain JCSC1435).